The primary structure comprises 574 residues: Sulfate adenylyltransferase (574 aa).

The tract at residues 1–169 (MSNPPHGGVL…VEAINKLNHY (169 aa)) is N-terminal. A catalytic region spans residues 170–394 (DYVALRYTPA…LRESSRPRST (225 aa)). Glutamine 197 serves as a coordination point for sulfate. ATP-binding positions include 197-200 (QTRN) and 291-294 (GRDH). Catalysis depends on residues threonine 198, arginine 199, and asparagine 200. Arginine 199 is a binding site for sulfate. Position 295 (alanine 295) interacts with sulfate. Valine 333 is a binding site for ATP. Residues 395–574 (QGFTIFLTGY…LETEGFFDRA (180 aa)) are allosteric regulation domain; adenylyl-sulfate kinase-like. 3'-phosphoadenylyl sulfate-binding positions include 434 to 437 (DTVR), arginine 451, 477 to 478 (IA), and arginine 516.

This sequence in the N-terminal section; belongs to the sulfate adenylyltransferase family. In the C-terminal section; belongs to the APS kinase family. Homohexamer. Dimer of trimers.

It localises to the cytoplasm. It carries out the reaction sulfate + ATP + H(+) = adenosine 5'-phosphosulfate + diphosphate. The protein operates within sulfur metabolism; hydrogen sulfide biosynthesis; sulfite from sulfate: step 1/3. Its activity is regulated as follows. Allosterically inhibited by 3'-phosphoadenosine 5'-phosphosulfate (PAPS). In terms of biological role, catalyzes the first intracellular reaction of sulfate assimilation, forming adenosine-5'-phosphosulfate (APS) from inorganic sulfate and ATP. Plays an important role in sulfate activation as a component of the biosynthesis pathway of sulfur-containing amino acids. The sequence is that of Sulfate adenylyltransferase from Aspergillus clavatus (strain ATCC 1007 / CBS 513.65 / DSM 816 / NCTC 3887 / NRRL 1 / QM 1276 / 107).